Reading from the N-terminus, the 409-residue chain is Small ribosomal subunit protein mS47 (409 aa).

A mitochondrion-targeting transit peptide spans 1 to 26 (MQTVKALRRVSEPLQWVRSVSYGRRF). Positions 388–409 (ASELDDSDSELKLPTAQREPYF) are disordered.

It belongs to the enoyl-CoA hydratase/isomerase family. Mitochondrion-specific ribosomal protein mS47 subfamily. As to quaternary structure, component of the mitochondrial ribosome small subunit.

It localises to the mitochondrion. In Arabidopsis thaliana (Mouse-ear cress), this protein is Small ribosomal subunit protein mS47.